A 497-amino-acid chain; its full sequence is Guanosine-5'-triphosphate,3'-diphosphate pyrophosphatase (497 aa).

This sequence belongs to the GppA/Ppx family. GppA subfamily.

The catalysed reaction is guanosine 3'-diphosphate 5'-triphosphate + H2O = guanosine 3',5'-bis(diphosphate) + phosphate + H(+). It participates in purine metabolism; ppGpp biosynthesis; ppGpp from GTP: step 2/2. In terms of biological role, catalyzes the conversion of pppGpp to ppGpp. Guanosine pentaphosphate (pppGpp) is a cytoplasmic signaling molecule which together with ppGpp controls the 'stringent response', an adaptive process that allows bacteria to respond to amino acid starvation, resulting in the coordinated regulation of numerous cellular activities. This is Guanosine-5'-triphosphate,3'-diphosphate pyrophosphatase from Pseudoalteromonas translucida (strain TAC 125).